The sequence spans 98 residues: Putative defensin-like protein 233 (98 aa).

A signal peptide spans Met1–Ala28. 4 disulfide bridges follow: Cys35-Cys96, Cys45-Cys70, Cys53-Cys86, and Cys68-Cys88.

It belongs to the DEFL family. As to expression, expressed at least in stem, root, rosette leaves and flower buds.

Its subcellular location is the secreted. The polypeptide is Putative defensin-like protein 233 (SCRL22) (Arabidopsis thaliana (Mouse-ear cress)).